Reading from the N-terminus, the 890-residue chain is Alanine--tRNA ligase (890 aa).

Residues H564, H568, C677, and H681 each coordinate Zn(2+).

Belongs to the class-II aminoacyl-tRNA synthetase family. Requires Zn(2+) as cofactor.

The protein resides in the cytoplasm. It catalyses the reaction tRNA(Ala) + L-alanine + ATP = L-alanyl-tRNA(Ala) + AMP + diphosphate. In terms of biological role, catalyzes the attachment of alanine to tRNA(Ala) in a two-step reaction: alanine is first activated by ATP to form Ala-AMP and then transferred to the acceptor end of tRNA(Ala). Also edits incorrectly charged Ser-tRNA(Ala) and Gly-tRNA(Ala) via its editing domain. This Rhodopseudomonas palustris (strain BisB18) protein is Alanine--tRNA ligase.